A 251-amino-acid chain; its full sequence is Small ribosomal subunit protein uS2 (251 aa).

This sequence belongs to the universal ribosomal protein uS2 family.

The polypeptide is Small ribosomal subunit protein uS2 (Chlorobium chlorochromatii (strain CaD3)).